Reading from the N-terminus, the 177-residue chain is Chorismate pyruvate-lyase (177 aa).

The substrate site is built by Met36, Arg78, Leu116, and Glu157.

This sequence belongs to the UbiC family. In terms of assembly, monomer.

The protein resides in the cytoplasm. It carries out the reaction chorismate = 4-hydroxybenzoate + pyruvate. It participates in cofactor biosynthesis; ubiquinone biosynthesis. Removes the pyruvyl group from chorismate, with concomitant aromatization of the ring, to provide 4-hydroxybenzoate (4HB) for the ubiquinone pathway. The sequence is that of Chorismate pyruvate-lyase from Pectobacterium atrosepticum (strain SCRI 1043 / ATCC BAA-672) (Erwinia carotovora subsp. atroseptica).